Here is a 314-residue protein sequence, read N- to C-terminus: Ferrochelatase (314 aa).

Fe cation contacts are provided by His-184 and Glu-259.

It belongs to the ferrochelatase family.

It localises to the cytoplasm. The enzyme catalyses heme b + 2 H(+) = protoporphyrin IX + Fe(2+). The protein operates within porphyrin-containing compound metabolism; protoheme biosynthesis; protoheme from protoporphyrin-IX: step 1/1. Catalyzes the ferrous insertion into protoporphyrin IX. This chain is Ferrochelatase, found in Chlamydia trachomatis serovar A (strain ATCC VR-571B / DSM 19440 / HAR-13).